Consider the following 517-residue polypeptide: 2-isopropylmalate synthase (517 aa).

The Pyruvate carboxyltransferase domain maps to 6 to 267; it reads IIVFDTTLRD…YTTINTPEIY (262 aa). Aspartate 15, histidine 201, histidine 203, and asparagine 237 together coordinate Mn(2+). Residues 393–517 are regulatory domain; that stretch reads DLIGLQISDC…RLSKSSEHQV (125 aa).

It belongs to the alpha-IPM synthase/homocitrate synthase family. LeuA type 1 subfamily. Homodimer. It depends on Mn(2+) as a cofactor.

The protein resides in the cytoplasm. It catalyses the reaction 3-methyl-2-oxobutanoate + acetyl-CoA + H2O = (2S)-2-isopropylmalate + CoA + H(+). It functions in the pathway amino-acid biosynthesis; L-leucine biosynthesis; L-leucine from 3-methyl-2-oxobutanoate: step 1/4. Catalyzes the condensation of the acetyl group of acetyl-CoA with 3-methyl-2-oxobutanoate (2-ketoisovalerate) to form 3-carboxy-3-hydroxy-4-methylpentanoate (2-isopropylmalate). This is 2-isopropylmalate synthase from Aliarcobacter butzleri (strain RM4018) (Arcobacter butzleri).